A 238-amino-acid chain; its full sequence is Small ribosomal subunit protein uS2 (238 aa).

It belongs to the universal ribosomal protein uS2 family.

This chain is Small ribosomal subunit protein uS2, found in Synechococcus sp. (strain CC9605).